The sequence spans 126 residues: Small ribosomal subunit protein uS12 (126 aa).

A compositionally biased stretch (polar residues) spans 1–16 (MPTVNQLVRQGRTMNK). A disordered region spans residues 1 to 24 (MPTVNQLVRQGRTMNKTKTKSPAL). 3-methylthioaspartic acid is present on Asp89.

Belongs to the universal ribosomal protein uS12 family. As to quaternary structure, part of the 30S ribosomal subunit. Contacts proteins S8 and S17. May interact with IF1 in the 30S initiation complex.

With S4 and S5 plays an important role in translational accuracy. In terms of biological role, interacts with and stabilizes bases of the 16S rRNA that are involved in tRNA selection in the A site and with the mRNA backbone. Located at the interface of the 30S and 50S subunits, it traverses the body of the 30S subunit contacting proteins on the other side and probably holding the rRNA structure together. The combined cluster of proteins S8, S12 and S17 appears to hold together the shoulder and platform of the 30S subunit. The polypeptide is Small ribosomal subunit protein uS12 (Elusimicrobium minutum (strain Pei191)).